A 405-amino-acid polypeptide reads, in one-letter code: GTPase Obg (405 aa).

Positions 1–159 (MRFIDEAVVT…KVLKFELKVV (159 aa)) constitute an Obg domain. Residues 160 to 333 (ADVGLIGLPN…IKYHLMNEIE (174 aa)) form the OBG-type G domain. GTP is bound by residues 166-173 (GLPNAGKS), 191-195 (FTTLV), 213-216 (DIPG), 283-286 (NKID), and 314-316 (ATL). 2 residues coordinate Mg(2+): S173 and T193. The segment covering 371–382 (YRAARKAAREGT) has biased composition (basic and acidic residues). The interval 371–405 (YRAARKAAREGTDLSDDDFDGSDDDDDGVEVIYAP) is disordered. Residues 383–399 (DLSDDDFDGSDDDDDGV) show a composition bias toward acidic residues.

This sequence belongs to the TRAFAC class OBG-HflX-like GTPase superfamily. OBG GTPase family. In terms of assembly, monomer. Requires Mg(2+) as cofactor.

Its subcellular location is the cytoplasm. Its function is as follows. An essential GTPase which binds GTP, GDP and possibly (p)ppGpp with moderate affinity, with high nucleotide exchange rates and a fairly low GTP hydrolysis rate. Plays a role in control of the cell cycle, stress response, ribosome biogenesis and in those bacteria that undergo differentiation, in morphogenesis control. The chain is GTPase Obg from Psychrobacter arcticus (strain DSM 17307 / VKM B-2377 / 273-4).